The following is a 227-amino-acid chain: tRNA (guanine-N(1)-)-methyltransferase (227 aa).

Residues Gly111 and 135 to 140 contribute to the S-adenosyl-L-methionine site; that span reads LGDYVL.

This sequence belongs to the RNA methyltransferase TrmD family. Homodimer.

It is found in the cytoplasm. It catalyses the reaction guanosine(37) in tRNA + S-adenosyl-L-methionine = N(1)-methylguanosine(37) in tRNA + S-adenosyl-L-homocysteine + H(+). Its function is as follows. Specifically methylates guanosine-37 in various tRNAs. This chain is tRNA (guanine-N(1)-)-methyltransferase, found in Leifsonia xyli subsp. xyli (strain CTCB07).